Here is a 189-residue protein sequence, read N- to C-terminus: MVWLLAILAYLLGSLSFAVLLSRWFGTQDPRASGSGNPGATNMLRVAGKKLAILTLLGDVGKGLLPVLVARWLGLGVMEEAWVGIAAVIGHLYPLYFNFRGGKGVATAAGMLLGLYPPAVLLAAAAWLLTFKLSRTSSLASLVATPLTLPLLAWQQPGALLPMTVLTGLIVWRHRANLRDLFAGRERHF.

A run of 5 helical transmembrane segments spans residues 1–21, 50–70, 72–92, 111–131, and 151–171; these read MVWL…AVLL, KLAI…VLVA, WLGL…IGHL, MLLG…LLTF, and LLAW…GLIV.

Belongs to the PlsY family. In terms of assembly, probably interacts with PlsX.

The protein localises to the cell inner membrane. The enzyme catalyses an acyl phosphate + sn-glycerol 3-phosphate = a 1-acyl-sn-glycero-3-phosphate + phosphate. It participates in lipid metabolism; phospholipid metabolism. Catalyzes the transfer of an acyl group from acyl-phosphate (acyl-PO(4)) to glycerol-3-phosphate (G3P) to form lysophosphatidic acid (LPA). This enzyme utilizes acyl-phosphate as fatty acyl donor, but not acyl-CoA or acyl-ACP. This is Glycerol-3-phosphate acyltransferase from Pseudomonas aeruginosa (strain LESB58).